Consider the following 170-residue polypeptide: 3-isopropylmalate dehydratase small subunit 1 (170 aa).

Belongs to the LeuD family. LeuD type 2 subfamily. As to quaternary structure, heterodimer of LeuC and LeuD.

It catalyses the reaction (2R,3S)-3-isopropylmalate = (2S)-2-isopropylmalate. It participates in amino-acid biosynthesis; L-leucine biosynthesis; L-leucine from 3-methyl-2-oxobutanoate: step 2/4. In terms of biological role, catalyzes the isomerization between 2-isopropylmalate and 3-isopropylmalate, via the formation of 2-isopropylmaleate. The protein is 3-isopropylmalate dehydratase small subunit 1 (leuD1) of Methanopyrus kandleri (strain AV19 / DSM 6324 / JCM 9639 / NBRC 100938).